Consider the following 430-residue polypeptide: MCSVSELLDMENFQGDLTDVVRGIGGHVLSPETPPSNIWPLPLSHPTPSPSDLNINPFGDPFVSMDDPLLQELNSITNSGYFSTVGDNNNNIHNNNGFLVPKVFEEDHIKSQCSIFPRIRISHSNIIHDSSPCNSPAMSAHVVAAAAAASPRGIINVDTNSPRNCLLVDGTTFSSQIQISSPRNLGLKRRKSQAKKVVCIPAPAAMNSRSSGEVVPSDLWAWRKYGQKPIKGSPFPRGYYRCSSSKGCSARKQVERSRTDPNMLVITYTSEHNHPWPIQRNALAGSTRSSTSSSSNPNPSKPSTANVNSSSIGSQNTIYLPSSTTPPPTLSSSAIKDERGDDMELENVDDDDDNQIAPYRPELHDHQHQPDDFFADLEELEGDSLSMLLSHGCGGDGKDKTTASDGISNFFGWSGDNNYNNYDDQDSRSL.

The WRKY DNA-binding region spans 211-277 (SGEVVPSDLW…YTSEHNHPWP (67 aa)). The interval 283–366 (LAGSTRSSTS…APYRPELHDH (84 aa)) is disordered. Residues 286 to 306 (STRSSTSSSSNPNPSKPSTAN) show a composition bias toward low complexity. Positions 307-319 (VNSSSIGSQNTIY) are enriched in polar residues. Over residues 340-354 (GDDMELENVDDDDDN) the composition is skewed to acidic residues.

The protein belongs to the WRKY group II-e family.

The protein localises to the nucleus. Its function is as follows. Transcription factor. Interacts specifically with the W box (5'-(T)TGAC[CT]-3'), a frequently occurring elicitor-responsive cis-acting element. The chain is Probable WRKY transcription factor 14 (WRKY14) from Arabidopsis thaliana (Mouse-ear cress).